We begin with the raw amino-acid sequence, 182 residues long: CDP-diacylglycerol--glycerol-3-phosphate 3-phosphatidyltransferase (182 aa).

The Cytoplasmic segment spans residues 1-12 (MRLNIPTCLTLF). A helical transmembrane segment spans residues 13–37 (RLIIVPFFIIVFYLPFSNASFYSAI). Over 38 to 60 (IFILAALTDWFDGFLARKLNQTT) the chain is Periplasmic. The helical transmembrane segment at 61-81 (CFGAFLDPVADKIIVVIGLIL) threads the bilayer. Residues 82–86 (IIEYF) lie on the Cytoplasmic side of the membrane. A helical membrane pass occupies residues 87–107 (HSFWITIPSLIMIIREIIISS). At 108–145 (LREWMAEIGKNNLLSVSLISKLKTSIQMLAIFSLLWKE) the chain is on the periplasmic side. A helical transmembrane segment spans residues 146–168 (TYIIIIIGILSLYVSSILAFLSM). Residues 169–181 (LKYFYIAWRDLFR) are Cytoplasmic-facing.

Belongs to the CDP-alcohol phosphatidyltransferase class-I family.

The protein localises to the cell inner membrane. It catalyses the reaction a CDP-1,2-diacyl-sn-glycerol + sn-glycerol 3-phosphate = a 1,2-diacyl-sn-glycero-3-phospho-(1'-sn-glycero-3'-phosphate) + CMP + H(+). Its pathway is phospholipid metabolism; phosphatidylglycerol biosynthesis; phosphatidylglycerol from CDP-diacylglycerol: step 1/2. Catalyzes the conversion of cytidine diphosphate diacylglycerol (CDP-DG) and glycerol 3-phosphate into phosphatidylglycerol. Essential for the synthesis of anionic phospholipids, thereby playing a role in balancing the ratio of zwitterionic and anionic phospholipids, which is thought to be important for normal membrane function. This chain is CDP-diacylglycerol--glycerol-3-phosphate 3-phosphatidyltransferase, found in Wigglesworthia glossinidia brevipalpis.